The primary structure comprises 380 residues: Cytochrome b (380 aa).

4 helical membrane-spanning segments follow: residues 33-53 (FGSL…FLAM), 77-98 (WLIR…YMHI), 113-133 (WNIG…GYVL), and 178-198 (FFAF…LHLL). 2 residues coordinate heme b: His83 and His97. Positions 182 and 196 each coordinate heme b. His201 provides a ligand contact to a ubiquinone. 4 helical membrane passes run 226–246 (YKDL…ALFA), 288–308 (LGGV…PFLH), 320–340 (LTQM…WIGG), and 347–367 (FIII…VLFP).

The protein belongs to the cytochrome b family. As to quaternary structure, the cytochrome bc1 complex contains 3 respiratory subunits (MT-CYB, CYC1 and UQCRFS1), 2 core proteins (UQCRC1 and UQCRC2) and probably 6 low-molecular weight proteins. Heme b serves as cofactor.

Its subcellular location is the mitochondrion inner membrane. Functionally, component of the ubiquinol-cytochrome c reductase complex (complex III or cytochrome b-c1 complex) that is part of the mitochondrial respiratory chain. The b-c1 complex mediates electron transfer from ubiquinol to cytochrome c. Contributes to the generation of a proton gradient across the mitochondrial membrane that is then used for ATP synthesis. This is Cytochrome b (mt-cyb) from Gadus morhua (Atlantic cod).